We begin with the raw amino-acid sequence, 396 residues long: 1-deoxy-D-xylulose 5-phosphate reductoisomerase (396 aa).

8 residues coordinate NADPH: threonine 10, glycine 11, serine 12, isoleucine 13, glycine 36, lysine 37, asparagine 38, and asparagine 124. Lysine 125 lines the 1-deoxy-D-xylulose 5-phosphate pocket. An NADPH-binding site is contributed by glutamate 126. Residue aspartate 150 participates in Mn(2+) binding. Residues serine 151, glutamate 152, serine 186, and histidine 209 each coordinate 1-deoxy-D-xylulose 5-phosphate. Mn(2+) is bound at residue glutamate 152. Position 215 (glycine 215) interacts with NADPH. 1-deoxy-D-xylulose 5-phosphate-binding residues include serine 222, asparagine 227, lysine 228, and glutamate 231. Glutamate 231 is a Mn(2+) binding site.

Belongs to the DXR family. Mg(2+) is required as a cofactor. Mn(2+) serves as cofactor.

The enzyme catalyses 2-C-methyl-D-erythritol 4-phosphate + NADP(+) = 1-deoxy-D-xylulose 5-phosphate + NADPH + H(+). The protein operates within isoprenoid biosynthesis; isopentenyl diphosphate biosynthesis via DXP pathway; isopentenyl diphosphate from 1-deoxy-D-xylulose 5-phosphate: step 1/6. Functionally, catalyzes the NADPH-dependent rearrangement and reduction of 1-deoxy-D-xylulose-5-phosphate (DXP) to 2-C-methyl-D-erythritol 4-phosphate (MEP). This is 1-deoxy-D-xylulose 5-phosphate reductoisomerase from Actinobacillus pleuropneumoniae serotype 5b (strain L20).